The chain runs to 359 residues: Hereditary hemochromatosis protein homolog (359 aa).

A signal peptide spans 1-24; it reads MSLSAGLPVRPLLLLLLLLWSVAP. The tract at residues 25 to 126 is alpha-1; sequence QALPPRSHSL…KVTKLGVVSE (102 aa). Residues 25-318 are Extracellular-facing; sequence QALPPRSHSL…WEPLQSQAMI (294 aa). 4 N-linked (GlcNAc...) asparagine glycosylation sites follow: Asn114, Asn142, Asn166, and Asn246. The tract at residues 127–217 is alpha-2; it reads SHILQVVLGC…ELGRGVLGQQ (91 aa). 2 disulfide bridges follow: Cys136-Cys199 and Cys237-Cys294. The alpha-3 stretch occupies residues 218–309; the sequence is VPTLVKVTRH…GLDQPLTASW (92 aa). The region spanning 219–308 is the Ig-like C1-type domain; the sequence is PTLVKVTRHW…PGLDQPLTAS (90 aa). Residues 310-318 are connecting peptide; sequence EPLQSQAMI. The helical transmembrane segment at 319-339 threads the bilayer; sequence IGIISGVTVCAIFLVGILFLI. The Cytoplasmic segment spans residues 340-359; that stretch reads LRKRKASGGTMGGYVLTDCE.

It belongs to the MHC class I family. Binds TFR through the extracellular domain in a pH-dependent manner.

It localises to the cell membrane. Functionally, binds to transferrin receptor (TFR) and reduces its affinity for iron-loaded transferrin. The chain is Hereditary hemochromatosis protein homolog (Hfe) from Mus musculus (Mouse).